The following is a 529-amino-acid chain: UDP-glucuronosyltransferase 2B1 (529 aa).

The first 23 residues, 1–23, serve as a signal peptide directing secretion; that stretch reads MSMKQTSVFLLIQLICYFRPGAC. Residues N134 and N316 are each glycosylated (N-linked (GlcNAc...) asparagine). Residues 494 to 510 form a helical membrane-spanning segment; that stretch reads VIGFLLLCVVGVVFIIT.

It belongs to the UDP-glycosyltransferase family.

The protein resides in the endoplasmic reticulum membrane. The catalysed reaction is glucuronate acceptor + UDP-alpha-D-glucuronate = acceptor beta-D-glucuronoside + UDP + H(+). The enzyme catalyses 17beta-estradiol + UDP-alpha-D-glucuronate = 17beta-estradiol 17-O-(beta-D-glucuronate) + UDP + H(+). Functionally, UDP-glucuronosyltransferase (UGT) that catalyzes phase II biotransformation reactions in which lipophilic substrates are conjugated with glucuronic acid to increase the metabolite's water solubility, thereby facilitating excretion into either the urine or bile. Essential for the elimination and detoxification of drugs, xenobiotics and endogenous compounds. Catalyzes the glucuronidation of the endogenous estrogen hormone estradiol. The protein is UDP-glucuronosyltransferase 2B1 of Rattus norvegicus (Rat).